Consider the following 796-residue polypeptide: Potassium transporter 10 (796 aa).

Residues 1 to 30 form a disordered region; the sequence is MAGRVESSIGGGEIDEEGDERGSMWDLDQS. The Cytoplasmic segment spans residues 1–58; the sequence is MAGRVESSIGGGEIDEEGDERGSMWDLDQSLDQPMDEEAGRLRNMYREKKFSAFLLLQ. Residues 59 to 79 traverse the membrane as a helical segment; that stretch reads LSFQSLGVVYGDLGTSPLYVF. The Extracellular segment spans residues 80–95; the sequence is YNTFPRGIKDPEDIIG. The helical transmembrane segment at 96 to 116 threads the bilayer; that stretch reads ALSLIIYSLTLIPLLKYVFVV. The Cytoplasmic segment spans residues 117–184; sequence CKANDNGQGG…ENGTSRKNAL (68 aa). The helical transmembrane segment at 185 to 205 threads the bilayer; the sequence is LILVLVGTCMVIGDGILTPAI. Residues 206 to 217 are Extracellular-facing; sequence SVLSAAGGLRVN. The chain crosses the membrane as a helical span at residues 218–238; that stretch reads LPHINNGIVVVVAVVILVSLF. The Cytoplasmic segment spans residues 239-248; the sequence is SVQHYGTDRV. The helical transmembrane segment at 249-269 threads the bilayer; the sequence is GWLFAPIVFLWFLFIASIGMF. The Extracellular segment spans residues 270–298; that stretch reads NIWKHDPSVLKAFSPVYIFRYFKRGGQDR. The helical transmembrane segment at 299 to 319 threads the bilayer; it reads WTSLGGIMLSITGIEALFADL. Over 320-321 the chain is Cytoplasmic; it reads SH. Residues 322–342 form a helical membrane-spanning segment; it reads FPVSAVQFAFTVIVFPCLLLA. Residues 343 to 368 are Extracellular-facing; that stretch reads YSGQAAYLRKYPHHVEDAFYQSIPKR. The helical transmembrane segment at 369–389 threads the bilayer; that stretch reads VYWPMFIIATAAAIVASQATI. The Cytoplasmic segment spans residues 390–420; the sequence is SATFSLIKQALAHGCFPRVKVVHTSRKFLGQ. Residues 421–441 traverse the membrane as a helical segment; sequence IYVPDINWILMILCIAVTAGF. Residues 442–453 are Extracellular-facing; sequence KNQNQIGNAYGT. The helical transmembrane segment at 454-474 threads the bilayer; the sequence is AVVIVMLVTTLLMMLIMILVW. Residues 475–480 are Cytoplasmic-facing; sequence RCHWVL. A helical transmembrane segment spans residues 481–501; it reads VLLFTLLSLVVECTYFSAVLF. Residues 502–505 lie on the Extracellular side of the membrane; it reads KVNQ. The chain crosses the membrane as a helical span at residues 506–526; it reads GGWVPLVIAAAFLVIMYVWHY. Residues 527-796 are Cytoplasmic-facing; the sequence is GTLKRYEFEM…LLNVGQIFYV (270 aa).

The protein belongs to the HAK/KUP transporter (TC 2.A.72.3) family.

It localises to the cell membrane. Putative potassium transporter. The chain is Potassium transporter 10 (POT10) from Arabidopsis thaliana (Mouse-ear cress).